We begin with the raw amino-acid sequence, 231 residues long: Ion-translocating oxidoreductase complex subunit E (231 aa).

Transmembrane regions (helical) follow at residues 18-38 (ALVQLLGLCPLLAVTSTATNA), 39-59 (LGLGLATTLVLTLTNLTISTL), 63-83 (TPAEIRIPIYVMIIASVVSAV), 86-106 (LINAYAFGLYQSLGIFIPLIV), 125-145 (ALSALDGFSIGMGATCAMFVL), and 182-202 (PFLLAMLPPSAFIGLGLMLAG).

The protein belongs to the NqrDE/RnfAE family. As to quaternary structure, the complex is composed of six subunits: RsxA, RsxB, RsxC, RsxD, RsxE and RsxG.

It localises to the cell inner membrane. Functionally, part of a membrane-bound complex that couples electron transfer with translocation of ions across the membrane. Required to maintain the reduced state of SoxR. This chain is Ion-translocating oxidoreductase complex subunit E, found in Escherichia coli O7:K1 (strain IAI39 / ExPEC).